A 251-amino-acid chain; its full sequence is Small ribosomal subunit protein uS3 (251 aa).

Positions 39–109 constitute a KH type-2 domain; that stretch reads IRNYVLARLK…EVKIDVVEVI (71 aa). The span at 221–239 shows a compositional bias: basic and acidic residues; the sequence is EMKRMKDRRADSKSRPRDP. Residues 221 to 251 form a disordered region; it reads EMKRMKDRRADSKSRPRDPRSKRRRSRTKRA. Basic residues predominate over residues 240–251; the sequence is RSKRRRSRTKRA.

The protein belongs to the universal ribosomal protein uS3 family. As to quaternary structure, part of the 30S ribosomal subunit. Forms a tight complex with proteins S10 and S14.

Its function is as follows. Binds the lower part of the 30S subunit head. Binds mRNA in the 70S ribosome, positioning it for translation. The sequence is that of Small ribosomal subunit protein uS3 from Chlorobium limicola (strain DSM 245 / NBRC 103803 / 6330).